Reading from the N-terminus, the 255-residue chain is MIRHKLQNFVNSLPISPERSCSYYPDRLSQIQYLPLQGKIEKDNLQFFFDSGFRRTGNILYRTSCNACRECLSYRVPLNQFVPSRNRKRLLKKNSDLVVRFGSPHLTVEKEILYLRYQRSRYQSFVIGESDQELLEGMRWNLFGYPENSLEMTLSLDEKILGFMILDSASDSLSAVYSVYDPDYPDRSLGSFAILYSILYAKELGMKYYHLGYFLPGHPDMDYKKHWVPSEIRELDTNDWIPFEEFQKKYADFSW.

Belongs to the R-transferase family. Bpt subfamily.

The protein localises to the cytoplasm. The enzyme catalyses N-terminal L-glutamyl-[protein] + L-leucyl-tRNA(Leu) = N-terminal L-leucyl-L-glutamyl-[protein] + tRNA(Leu) + H(+). The catalysed reaction is N-terminal L-aspartyl-[protein] + L-leucyl-tRNA(Leu) = N-terminal L-leucyl-L-aspartyl-[protein] + tRNA(Leu) + H(+). Functionally, functions in the N-end rule pathway of protein degradation where it conjugates Leu from its aminoacyl-tRNA to the N-termini of proteins containing an N-terminal aspartate or glutamate. This Leptospira borgpetersenii serovar Hardjo-bovis (strain JB197) protein is Aspartate/glutamate leucyltransferase.